The following is a 334-amino-acid chain: Ketol-acid reductoisomerase (NADP(+)) (334 aa).

The 181-residue stretch at 1–181 (MNRYYDKNAD…GGGRTGILET (181 aa)) folds into the KARI N-terminal Rossmann domain. NADP(+)-binding positions include 24–27 (YGSQ), R47, S50, S52, and 82–85 (DEFQ). The active site involves H107. G133 contacts NADP(+). The 142-residue stretch at 182–323 (SFKDETETDL…ESLRSMMPWI (142 aa)) folds into the KARI C-terminal knotted domain. Mg(2+) contacts are provided by D190, E194, E226, and E230. S251 is a binding site for substrate.

Belongs to the ketol-acid reductoisomerase family. Mg(2+) serves as cofactor.

The enzyme catalyses (2R)-2,3-dihydroxy-3-methylbutanoate + NADP(+) = (2S)-2-acetolactate + NADPH + H(+). It carries out the reaction (2R,3R)-2,3-dihydroxy-3-methylpentanoate + NADP(+) = (S)-2-ethyl-2-hydroxy-3-oxobutanoate + NADPH + H(+). Its pathway is amino-acid biosynthesis; L-isoleucine biosynthesis; L-isoleucine from 2-oxobutanoate: step 2/4. It functions in the pathway amino-acid biosynthesis; L-valine biosynthesis; L-valine from pyruvate: step 2/4. Its function is as follows. Involved in the biosynthesis of branched-chain amino acids (BCAA). Catalyzes an alkyl-migration followed by a ketol-acid reduction of (S)-2-acetolactate (S2AL) to yield (R)-2,3-dihydroxy-isovalerate. In the isomerase reaction, S2AL is rearranged via a Mg-dependent methyl migration to produce 3-hydroxy-3-methyl-2-ketobutyrate (HMKB). In the reductase reaction, this 2-ketoacid undergoes a metal-dependent reduction by NADPH to yield (R)-2,3-dihydroxy-isovalerate. The protein is Ketol-acid reductoisomerase (NADP(+)) of Ruthia magnifica subsp. Calyptogena magnifica.